Consider the following 218-residue polypeptide: Ras-related protein Rab-27B (218 aa).

Residue threonine 2 is modified to N-acetylthreonine. Position 16–24 (16–24 (GDSGVGKTT)) interacts with GTP. The Effector region motif lies at 38-46 (FITTVGIDF). Residues 74 to 78 (DTAGQ), 133 to 136 (NKAD), and 163 to 165 (SAA) contribute to the GTP site. The cysteines at positions 123 and 188 are disulfide-linked. The disordered stretch occupies residues 193 to 218 (HIPDTVNGSSSGKLDGEKSAEKKCAC). The segment covering 206-218 (LDGEKSAEKKCAC) has biased composition (basic and acidic residues). 2 S-geranylgeranyl cysteine lipidation sites follow: cysteine 216 and cysteine 218. Cysteine 218 bears the Cysteine methyl ester mark.

Belongs to the small GTPase superfamily. Rab family. In terms of assembly, interacts with SYTL2, SYTL4, MYRIP and MLPH. Interacts with RPH3A and RPH3A. Interacts (GDP-bound form preferentially) with DENND10. In terms of tissue distribution, expressed at an extraordinary high level (0.1% of total protein) in urothelium.

It localises to the membrane. The protein resides in the late endosome. It carries out the reaction GTP + H2O = GDP + phosphate + H(+). With respect to regulation, regulated by guanine nucleotide exchange factors (GEFs) which promote the exchange of bound GDP for free GTP, GTPase activating proteins (GAPs) which increase the GTP hydrolysis activity, and GDP dissociation inhibitors which inhibit the dissociation of the nucleotide from the GTPase. Activated by GEFs such as DENND10. In terms of biological role, small GTPase which cycles between active GTP-bound and inactive GDP-bound states. In its active state, binds to a variety of effector proteins to regulate homeostasis of late endocytic pathway, including endosomal positioning, maturation and secretion. Plays a role in NTRK2/TRKB axonal anterograde transport by facilitating the association of NTRK2/TRKB with KLC1. May be involved in targeting uroplakins to urothelial apical membranes. In Bos taurus (Bovine), this protein is Ras-related protein Rab-27B (RAB27B).